The sequence spans 488 residues: Serine/threonine-protein kinase 32C (488 aa).

The disordered stretch occupies residues 1–56 (MRSGAERRGSSAAAPPSSPPPGRARPAGSDVSPALPPPAASQPRARDAGDARAQPR). 3 positions are modified to phosphoserine: Ser-10, Ser-17, and Ser-18. Over residues 24–33 (ARPAGSDVSP) the composition is skewed to low complexity. Residues 94–354 (FQILRAIGKG…LQDMQTAPSL (261 aa)) enclose the Protein kinase domain. Residues 100–108 (IGKGSFGKV) and Lys-123 contribute to the ATP site. Residue Asp-217 is the Proton acceptor of the active site. Residues 397–406 (HKKKKRLAKN) show a composition bias toward basic residues. Disordered stretches follow at residues 397-420 (HKKK…QSEN) and 443-488 (KRSQ…SGSS).

Belongs to the protein kinase superfamily. Ser/Thr protein kinase family. It depends on Mg(2+) as a cofactor.

It catalyses the reaction L-seryl-[protein] + ATP = O-phospho-L-seryl-[protein] + ADP + H(+). It carries out the reaction L-threonyl-[protein] + ATP = O-phospho-L-threonyl-[protein] + ADP + H(+). The sequence is that of Serine/threonine-protein kinase 32C from Mus musculus (Mouse).